A 176-amino-acid chain; its full sequence is Flavodoxin 1 (176 aa).

The Flavodoxin-like domain maps to 4–165 (TGIFFGSDTG…RVEKWVKQIS (162 aa)).

Belongs to the flavodoxin family. FMN serves as cofactor.

Low-potential electron donor to a number of redox enzymes (Potential). Involved in the reactivation of inactive cob(II)alamin in methionine synthase. The chain is Flavodoxin 1 (fldA) from Escherichia coli O157:H7.